A 268-amino-acid polypeptide reads, in one-letter code: GTP cyclohydrolase FolE2 (268 aa).

This sequence belongs to the GTP cyclohydrolase IV family.

It catalyses the reaction GTP + H2O = 7,8-dihydroneopterin 3'-triphosphate + formate + H(+). It functions in the pathway cofactor biosynthesis; 7,8-dihydroneopterin triphosphate biosynthesis; 7,8-dihydroneopterin triphosphate from GTP: step 1/1. Converts GTP to 7,8-dihydroneopterin triphosphate. The sequence is that of GTP cyclohydrolase FolE2 from Paraburkholderia phymatum (strain DSM 17167 / CIP 108236 / LMG 21445 / STM815) (Burkholderia phymatum).